The chain runs to 187 residues: ATP synthase subunit b (187 aa).

A helical transmembrane segment spans residues Asn32–Gly52.

It belongs to the ATPase B chain family. In terms of assembly, F-type ATPases have 2 components, F(1) - the catalytic core - and F(0) - the membrane proton channel. F(1) has five subunits: alpha(3), beta(3), gamma(1), delta(1), epsilon(1). F(0) has four main subunits: a(1), b(1), b'(1) and c(10-14). The alpha and beta chains form an alternating ring which encloses part of the gamma chain. F(1) is attached to F(0) by a central stalk formed by the gamma and epsilon chains, while a peripheral stalk is formed by the delta, b and b' chains.

Its subcellular location is the cellular thylakoid membrane. Its function is as follows. F(1)F(0) ATP synthase produces ATP from ADP in the presence of a proton or sodium gradient. F-type ATPases consist of two structural domains, F(1) containing the extramembraneous catalytic core and F(0) containing the membrane proton channel, linked together by a central stalk and a peripheral stalk. During catalysis, ATP synthesis in the catalytic domain of F(1) is coupled via a rotary mechanism of the central stalk subunits to proton translocation. In terms of biological role, component of the F(0) channel, it forms part of the peripheral stalk, linking F(1) to F(0). The chain is ATP synthase subunit b from Trichormus variabilis (strain ATCC 29413 / PCC 7937) (Anabaena variabilis).